Here is a 321-residue protein sequence, read N- to C-terminus: Homoserine O-succinyltransferase (321 aa).

Catalysis depends on Cys142, which acts as the Acyl-thioester intermediate. Lys163 and Ser192 together coordinate substrate. His235 serves as the catalytic Proton acceptor. Glu237 is an active-site residue. Arg249 contributes to the substrate binding site.

The protein belongs to the MetA family.

The protein localises to the cytoplasm. The catalysed reaction is L-homoserine + succinyl-CoA = O-succinyl-L-homoserine + CoA. It functions in the pathway amino-acid biosynthesis; L-methionine biosynthesis via de novo pathway; O-succinyl-L-homoserine from L-homoserine: step 1/1. In terms of biological role, transfers a succinyl group from succinyl-CoA to L-homoserine, forming succinyl-L-homoserine. The polypeptide is Homoserine O-succinyltransferase (Shewanella loihica (strain ATCC BAA-1088 / PV-4)).